We begin with the raw amino-acid sequence, 241 residues long: Purine nucleoside phosphorylase DeoD-type 1 (241 aa).

H5 provides a ligand contact to a purine D-ribonucleoside. Phosphate is bound by residues G21, R25, R44, and 88-91; that span reads RVGS. Residues 180 to 182 and 204 to 205 each bind a purine D-ribonucleoside; these read EME and SD. The active-site Proton donor is D205.

The protein belongs to the PNP/UDP phosphorylase family. Homohexamer; trimer of homodimers.

It carries out the reaction a purine D-ribonucleoside + phosphate = a purine nucleobase + alpha-D-ribose 1-phosphate. The enzyme catalyses a purine 2'-deoxy-D-ribonucleoside + phosphate = a purine nucleobase + 2-deoxy-alpha-D-ribose 1-phosphate. Its function is as follows. Catalyzes the reversible phosphorolytic breakdown of the N-glycosidic bond in the beta-(deoxy)ribonucleoside molecules, with the formation of the corresponding free purine bases and pentose-1-phosphate. The chain is Purine nucleoside phosphorylase DeoD-type 1 from Vibrio cholerae serotype O1 (strain ATCC 39315 / El Tor Inaba N16961).